Consider the following 249-residue polypeptide: MRLDLYPAIDLKDGQVVRLRQGRMDEATVYGVDPVRIAARWAEAGARWIHVVDLDGALRGRPQNAAAVRAIVEALRQRHPGVRVQLGGGLRTLEALEAALALGVSRAIIGTSALEGDVAARAVARFGPDRVAVSIDARGGFVAARGWVEVTRVRAVDLAVRMREVGVRTVVYTDIATDGMLTGPNFAELEMMGRTGLDVIASGGISSLEDIRRLTEIPGVAGAIIGRALYTGAVDLAEALSLCGETRDT.

D10 (proton acceptor) is an active-site residue. Catalysis depends on D136, which acts as the Proton donor.

This sequence belongs to the HisA/HisF family.

It is found in the cytoplasm. It carries out the reaction 1-(5-phospho-beta-D-ribosyl)-5-[(5-phospho-beta-D-ribosylamino)methylideneamino]imidazole-4-carboxamide = 5-[(5-phospho-1-deoxy-D-ribulos-1-ylimino)methylamino]-1-(5-phospho-beta-D-ribosyl)imidazole-4-carboxamide. It participates in amino-acid biosynthesis; L-histidine biosynthesis; L-histidine from 5-phospho-alpha-D-ribose 1-diphosphate: step 4/9. This is 1-(5-phosphoribosyl)-5-[(5-phosphoribosylamino)methylideneamino] imidazole-4-carboxamide isomerase from Symbiobacterium thermophilum (strain DSM 24528 / JCM 14929 / IAM 14863 / T).